The sequence spans 491 residues: Glutamate--tRNA ligase (491 aa).

Positions 14–24 (PSPTGSPHVGL) match the 'HIGH' region motif. Zn(2+) contacts are provided by Cys-111, Cys-113, Cys-136, and Asp-138. Residues 257-261 (KLSKR) carry the 'KMSKS' region motif. An ATP-binding site is contributed by Lys-260.

It belongs to the class-I aminoacyl-tRNA synthetase family. Glutamate--tRNA ligase type 1 subfamily. In terms of assembly, monomer. The cofactor is Zn(2+).

Its subcellular location is the cytoplasm. It catalyses the reaction tRNA(Glu) + L-glutamate + ATP = L-glutamyl-tRNA(Glu) + AMP + diphosphate. In terms of biological role, catalyzes the attachment of glutamate to tRNA(Glu) in a two-step reaction: glutamate is first activated by ATP to form Glu-AMP and then transferred to the acceptor end of tRNA(Glu). The polypeptide is Glutamate--tRNA ligase (Nocardioides sp. (strain ATCC BAA-499 / JS614)).